Reading from the N-terminus, the 274-residue chain is 4-diphosphocytidyl-2-C-methyl-D-erythritol kinase (274 aa).

K8 is an active-site residue. 94-104 (PSGAGLGGGSS) serves as a coordination point for ATP. The active site involves D136.

The protein belongs to the GHMP kinase family. IspE subfamily.

The catalysed reaction is 4-CDP-2-C-methyl-D-erythritol + ATP = 4-CDP-2-C-methyl-D-erythritol 2-phosphate + ADP + H(+). It participates in isoprenoid biosynthesis; isopentenyl diphosphate biosynthesis via DXP pathway; isopentenyl diphosphate from 1-deoxy-D-xylulose 5-phosphate: step 3/6. Catalyzes the phosphorylation of the position 2 hydroxy group of 4-diphosphocytidyl-2C-methyl-D-erythritol. In Bacteroides thetaiotaomicron (strain ATCC 29148 / DSM 2079 / JCM 5827 / CCUG 10774 / NCTC 10582 / VPI-5482 / E50), this protein is 4-diphosphocytidyl-2-C-methyl-D-erythritol kinase.